The primary structure comprises 173 residues: Probable WRKY transcription factor 50 (173 aa).

The segment at residues 107–172 (SEVEVLDDGF…YEGSHNHSSM (66 aa)) is a DNA-binding region (WRKY).

It belongs to the WRKY group II-c family.

It is found in the nucleus. Transcription factor. Interacts specifically with the W box (5'-(T)TGAC[CT]-3'), a frequently occurring elicitor-responsive cis-acting element. The chain is Probable WRKY transcription factor 50 (WRKY50) from Arabidopsis thaliana (Mouse-ear cress).